The primary structure comprises 745 residues: Receptor-type adenylate cyclase (745 aa).

Over 1-341 (GELGQTDRFF…NEGALTRAQL (341 aa)) the chain is Extracellular. N-linked (GlcNAc...) asparagine glycans are attached at residues asparagine 15, asparagine 50, asparagine 189, and asparagine 312. The chain crosses the membrane as a helical span at residues 342–362 (IGVVVGTIFAVLLLLALGIVL). The Cytoplasmic portion of the chain corresponds to 363 to 745 (CVALRNTRDN…GSDEVARTCV (383 aa)). The 155-residue stretch at 384 to 538 (TLIFTDIESS…RTPNLAARTE (155 aa)) folds into the Guanylate cyclase domain. Aspartate 389 and aspartate 432 together coordinate Mg(2+).

This sequence belongs to the adenylyl cyclase class-3 family. The cofactor is Mg(2+).

The protein localises to the cell membrane. The catalysed reaction is ATP = 3',5'-cyclic AMP + diphosphate. Its function is as follows. Could act as a receptor for an unknown ligand. The protein is Receptor-type adenylate cyclase of Trypanosoma congolense.